Consider the following 231-residue polypeptide: UPF0749 protein YlxW (231 aa).

Residues 1 to 34 form the signal peptide; that stretch reads MRGKSAVLLSLIMLIAGFLISFSFQMTKENNKSA. Positions 44–94 form a coiled coil; sequence YALRDELLKQEKENKKFEKELYQKQNKVRQAENKLKKEKSEYYNVLEDTEK.

Belongs to the UPF0749 family.

In terms of biological role, may be involved in cell division and sporulation. The protein is UPF0749 protein YlxW (ylxW) of Bacillus subtilis (strain 168).